The primary structure comprises 432 residues: Lipoyl synthase, mitochondrial (432 aa).

Residues 32–68 (TLGATPGSTSTSTSTSTATTTTLESTSTSTSGDATET) are compositionally biased toward low complexity. The segment at 32–71 (TLGATPGSTSTSTSTSTATTTTLESTSTSTSGDATETTIK) is disordered. [4Fe-4S] cluster contacts are provided by cysteine 150, cysteine 155, cysteine 161, cysteine 180, cysteine 184, cysteine 187, and serine 395. The Radical SAM core domain occupies 165-384 (KKSEATATIM…RDVALEMGFL (220 aa)).

The protein belongs to the radical SAM superfamily. Lipoyl synthase family. The cofactor is [4Fe-4S] cluster.

The protein resides in the mitochondrion. The enzyme catalyses [[Fe-S] cluster scaffold protein carrying a second [4Fe-4S](2+) cluster] + N(6)-octanoyl-L-lysyl-[protein] + 2 oxidized [2Fe-2S]-[ferredoxin] + 2 S-adenosyl-L-methionine + 4 H(+) = [[Fe-S] cluster scaffold protein] + N(6)-[(R)-dihydrolipoyl]-L-lysyl-[protein] + 4 Fe(3+) + 2 hydrogen sulfide + 2 5'-deoxyadenosine + 2 L-methionine + 2 reduced [2Fe-2S]-[ferredoxin]. Its pathway is protein modification; protein lipoylation via endogenous pathway; protein N(6)-(lipoyl)lysine from octanoyl-[acyl-carrier-protein]: step 2/2. In terms of biological role, catalyzes the radical-mediated insertion of two sulfur atoms into the C-6 and C-8 positions of the octanoyl moiety bound to the lipoyl domains of lipoate-dependent enzymes, thereby converting the octanoylated domains into lipoylated derivatives. The chain is Lipoyl synthase, mitochondrial from Lodderomyces elongisporus (strain ATCC 11503 / CBS 2605 / JCM 1781 / NBRC 1676 / NRRL YB-4239) (Yeast).